The sequence spans 452 residues: Serine incorporator 2 (452 aa).

11 helical membrane passes run 5 to 25 (LGACSLLSCASCLCGSAPCIL), 41 to 61 (FFTVFLFLGVLVCVIMLSPGV), 96 to 116 (AVYRMCFAMAAFFFLFSLLMV), 131 to 151 (GFWFFKFLIFVGITVGAFYIP), 158 to 178 (IWFYFGVVGSFIFLLIQLLLL), 205 to 225 (LFFFTLLFYALSITAVALLFV), 236 to 256 (GKVFIGLNLTLCVCVSIVAIL), 266 to 286 (SGLLQASVITLYTMFVTWLAL), 319 to 339 (WDAPSIVGLVVFILCTVFISL), 387 to 407 (FFHLCLVLASVHIMMTLTNWY), and 426 to 446 (ICASWTGLLLYLWTLVAPLLL).

Belongs to the TDE1 family.

It localises to the cell membrane. It carries out the reaction a 1,2-diacyl-sn-glycero-3-phospho-L-serine(in) = a 1,2-diacyl-sn-glycero-3-phospho-L-serine(out). The enzyme catalyses a 1,2-diacyl-sn-glycero-3-phosphocholine(in) = a 1,2-diacyl-sn-glycero-3-phosphocholine(out). The catalysed reaction is a 1,2-diacyl-sn-glycero-3-phosphoethanolamine(in) = a 1,2-diacyl-sn-glycero-3-phosphoethanolamine(out). In terms of biological role, non-ATP-dependent, non-specific lipid transporter for phosphatidylserine, phosphatidylcholine, and phosphatidylethanolamine. Functions as a scramblase that flips lipids in both directions across the membrane. In contrast to SERINC3 and SERINC5, has no effect on gammaretrovirus particles infectivity. This chain is Serine incorporator 2 (SERINC2), found in Bos taurus (Bovine).